The primary structure comprises 324 residues: DNA repair and recombination protein RadA (324 aa).

107–114 (GEFGSGKS) contributes to the ATP binding site.

Belongs to the eukaryotic RecA-like protein family.

Its function is as follows. Involved in DNA repair and in homologous recombination. Binds and assemble on single-stranded DNA to form a nucleoprotein filament. Hydrolyzes ATP in a ssDNA-dependent manner and promotes DNA strand exchange between homologous DNA molecules. The chain is DNA repair and recombination protein RadA from Methanoculleus marisnigri (strain ATCC 35101 / DSM 1498 / JR1).